A 107-amino-acid chain; its full sequence is Anaphase-promoting complex subunit 14 (107 aa).

The APC/C is composed of at least 13 subunits: apc1, apc2, nuc2, apc4, apc5, cut9, apc8, apc10, apc11, hcn1, apc13, apc14 and apc15.

The protein localises to the ascus epiplasm. Its function is as follows. Component of the anaphase promoting complex/cyclosome (APC/C), a cell cycle-regulated E3 ubiquitin-protein ligase complex that controls progression through mitosis and the G1 phase of the cell cycle. The APC/C is thought to confer substrate specificity and, in the presence of ubiquitin-conjugating E2 enzymes, it catalyzes the formation of protein-ubiquitin conjugates that are subsequently degraded by the 26S proteasome. Appears to play a role in spore wall formation. This chain is Anaphase-promoting complex subunit 14, found in Schizosaccharomyces pombe (strain 972 / ATCC 24843) (Fission yeast).